An 88-amino-acid polypeptide reads, in one-letter code: Phosphocarrier protein HPr (88 aa).

The 88-residue stretch at 1–88 folds into the HPr domain; the sequence is MASKEFHIVA…ETMTKEGLAE (88 aa). His15 acts as the Pros-phosphohistidine intermediate in catalysis. Ser46 is modified (phosphoserine; by HPrK/P).

Belongs to the HPr family.

It localises to the cytoplasm. With respect to regulation, phosphorylation on Ser-46 inhibits the phosphoryl transfer from enzyme I to HPr. Its function is as follows. General (non sugar-specific) component of the phosphoenolpyruvate-dependent sugar phosphotransferase system (sugar PTS). This major carbohydrate active-transport system catalyzes the phosphorylation of incoming sugar substrates concomitantly with their translocation across the cell membrane. The phosphoryl group from phosphoenolpyruvate (PEP) is transferred to the phosphoryl carrier protein HPr by enzyme I. Phospho-HPr then transfers it to the PTS EIIA domain. Functionally, P-Ser-HPr interacts with the catabolite control protein A (CcpA), forming a complex that binds to DNA at the catabolite response elements cre, operator sites preceding a large number of catabolite-regulated genes. Thus, P-Ser-HPr is a corepressor in carbon catabolite repression (CCR), a mechanism that allows bacteria to coordinate and optimize the utilization of available carbon sources. P-Ser-HPr also plays a role in inducer exclusion, in which it probably interacts with several non-PTS permeases and inhibits their transport activity. This Lactococcus lactis subsp. cremoris (Streptococcus cremoris) protein is Phosphocarrier protein HPr (ptsH).